The sequence spans 372 residues: MSEAGEATTTTTTTLPQAPTEAAAAAPQDPAPKSPVGSGAPQAAAPAPAAHVAGNPGGDAAPAATGTAAAASLATAAGSEDAEKKVLATKVLGTVKWFNVRNGYGFINRNDTKEDVFVHQTAIKKNNPRKYLRSVGDGETVEFDVVEGEKGAEAANVTGPDGVPVEGSRYAADRRRYRRGYYGRRRGPPRNYAGEEEEEGSGSSEGFDPPATDRQFSGARNQLRRPQYRPQYRQRRFPPYHVGQTFDRRSRVLPHPNRIQAGEIGEMKDGVPEGAQLQGPVHRNPTYRPRYRSRGPPRPRPAPAVGEAEDKENQQATSGPNQPSVRRGYRRPYNYRRRPRPPNAPSQDGKEAKAGEAPTENPAPPTQQSSAE.

The tract at residues 1–82 (MSEAGEATTT…LATAAGSEDA (82 aa)) is disordered. Serine 2 carries the N-acetylserine modification. The residue at position 2 (serine 2) is a Phosphoserine. Low complexity predominate over residues 7 to 28 (ATTTTTTTLPQAPTEAAAAAPQ). The residue at position 34 (serine 34) is a Phosphoserine. Residues 35 to 79 (PVGSGAPQAAAPAPAAHVAGNPGGDAAPAATGTAAAASLATAAGS) are compositionally biased toward low complexity. One can recognise a CSD domain in the interval 93–157 (GTVKWFNVRN…GEKGAEAANV (65 aa)). 4 positions are modified to phosphoserine: serine 134, serine 201, serine 203, and serine 204. The interval 181–372 (YYGRRRGPPR…APPTQQSSAE (192 aa)) is disordered. Over residues 222–238 (QLRRPQYRPQYRQRRFP) the composition is skewed to basic residues. Arginine 251 carries the omega-N-methylarginine modification. The segment covering 314-324 (QQATSGPNQPS) has biased composition (polar residues). At serine 324 the chain carries Phosphoserine. Arginine 326 carries the post-translational modification Omega-N-methylarginine. Residues 327 to 340 (RGYRRPYNYRRRPR) are compositionally biased toward basic residues. Residues serine 346, serine 369, and serine 370 each carry the phosphoserine modification.

Found in a mRNP complex with YBX2. Interacts with RRP1B. As to expression, highly expressed in skeletal muscle and heart.

Its subcellular location is the cytoplasm. It is found in the nucleus. Its function is as follows. Binds to the GM-CSF promoter. Seems to act as a repressor. Also binds to full-length mRNA and to short RNA sequences containing the consensus site 5'-UCCAUCA-3'. May have a role in translation repression. This Homo sapiens (Human) protein is Y-box-binding protein 3 (YBX3).